The primary structure comprises 591 residues: L-fucose isomerase (591 aa).

Catalysis depends on proton acceptor residues glutamate 337 and aspartate 361. Residues glutamate 337, aspartate 361, and histidine 528 each coordinate Mn(2+).

It belongs to the L-fucose isomerase family. In terms of assembly, homohexamer. Mn(2+) is required as a cofactor.

It is found in the cytoplasm. It catalyses the reaction L-fucose = L-fuculose. It participates in carbohydrate degradation; L-fucose degradation; L-lactaldehyde and glycerone phosphate from L-fucose: step 1/3. In terms of biological role, converts the aldose L-fucose into the corresponding ketose L-fuculose. This chain is L-fucose isomerase, found in Citrobacter koseri (strain ATCC BAA-895 / CDC 4225-83 / SGSC4696).